The following is a 420-amino-acid chain: Glucose-1-phosphate adenylyltransferase (420 aa).

Residues Y107, G172, 187–188 (EK), and S205 each bind alpha-D-glucose 1-phosphate.

This sequence belongs to the bacterial/plant glucose-1-phosphate adenylyltransferase family. As to quaternary structure, homotetramer.

The catalysed reaction is alpha-D-glucose 1-phosphate + ATP + H(+) = ADP-alpha-D-glucose + diphosphate. The protein operates within glycan biosynthesis; glycogen biosynthesis. Functionally, involved in the biosynthesis of ADP-glucose, a building block required for the elongation reactions to produce glycogen. Catalyzes the reaction between ATP and alpha-D-glucose 1-phosphate (G1P) to produce pyrophosphate and ADP-Glc. The protein is Glucose-1-phosphate adenylyltransferase of Bradyrhizobium diazoefficiens (strain JCM 10833 / BCRC 13528 / IAM 13628 / NBRC 14792 / USDA 110).